A 148-amino-acid chain; its full sequence is Large ribosomal subunit protein uL15 (148 aa).

Over residues 1 to 30 (MPSKLRKTRKLRGHVSHGHGRIGKHRKHPG) the composition is skewed to basic residues. Residues 1–38 (MPSKLRKTRKLRGHVSHGHGRIGKHRKHPGGRGNAGGM) are disordered.

Belongs to the universal ribosomal protein uL15 family. As to quaternary structure, component of the large ribosomal subunit.

Its subcellular location is the cytoplasm. Component of the large ribosomal subunit. The ribosome is a large ribonucleoprotein complex responsible for the synthesis of proteins in the cell. In Xenopus laevis (African clawed frog), this protein is Large ribosomal subunit protein uL15 (rpl27a).